The following is a 382-amino-acid chain: Mannitol-1-phosphate 5-dehydrogenase (382 aa).

Residue 3–14 participates in NAD(+) binding; that stretch reads ALHFGAGNIGRG. Lys269 carries the N6-acetyllysine modification.

Belongs to the mannitol dehydrogenase family.

The catalysed reaction is D-mannitol 1-phosphate + NAD(+) = beta-D-fructose 6-phosphate + NADH + H(+). This Escherichia coli O81 (strain ED1a) protein is Mannitol-1-phosphate 5-dehydrogenase.